The primary structure comprises 502 residues: Type II secretion system protein E (502 aa).

Residue G263–T270 coordinates ATP. 4 residues coordinate Zn(2+): C396, C399, C429, and C432. A disordered region spans residues S461–D480.

It belongs to the GSP E family. Homodimer. Dimerization is directed by a relatively short domain near the extreme N-terminus and is essential for extracellular protein secretion. May form homooligomers. Interacts with XcpY/GspL. Forms an inner membrane platform subcomplex with XcpS/GspF, XcpY/GspL and XcpZ/GspM. The cofactor is Zn(2+).

It is found in the cell inner membrane. The enzyme catalyses ATP + H2O + cellular proteinSide 1 = ADP + phosphate + cellular proteinSide 2.. ATPase component of the type II secretion system required for the energy-dependent secretion of extracellular factors such as proteases and toxins from the periplasm. Acts as a molecular motor to provide the energy that is required for assembly of the pseudopilus and the extrusion of substrates generated in the cytoplasm. The polypeptide is Type II secretion system protein E (xcpR) (Pseudomonas aeruginosa (strain ATCC 15692 / DSM 22644 / CIP 104116 / JCM 14847 / LMG 12228 / 1C / PRS 101 / PAO1)).